The following is an 856-amino-acid chain: Valine--tRNA ligase (856 aa).

The 'HIGH' region motif lies at 47 to 57 (PTASGVLHIGH). The 'KMSKS' region motif lies at 578–582 (KMSKS). Residue Lys581 coordinates ATP.

It belongs to the class-I aminoacyl-tRNA synthetase family. ValS type 2 subfamily. Monomer.

The protein localises to the cytoplasm. The catalysed reaction is tRNA(Val) + L-valine + ATP = L-valyl-tRNA(Val) + AMP + diphosphate. Its function is as follows. Catalyzes the attachment of valine to tRNA(Val). As ValRS can inadvertently accommodate and process structurally similar amino acids such as threonine, to avoid such errors, it has a 'posttransfer' editing activity that hydrolyzes mischarged Thr-tRNA(Val) in a tRNA-dependent manner. This chain is Valine--tRNA ligase, found in Tropheryma whipplei (strain TW08/27) (Whipple's bacillus).